The chain runs to 490 residues: Bifunctional protein HldE (490 aa).

A ribokinase region spans residues 1–330 (MFDFDDLSQA…RKILPHAYRA (330 aa)). An ATP-binding site is contributed by 205–208 (NRKE). Residue D275 is part of the active site. The cytidylyltransferase stretch occupies residues 358-490 (FTNGCFDILH…LVDRARSDQR (133 aa)).

In the N-terminal section; belongs to the carbohydrate kinase PfkB family. This sequence in the C-terminal section; belongs to the cytidylyltransferase family. Homodimer.

It carries out the reaction D-glycero-beta-D-manno-heptose 7-phosphate + ATP = D-glycero-beta-D-manno-heptose 1,7-bisphosphate + ADP + H(+). It catalyses the reaction D-glycero-beta-D-manno-heptose 1-phosphate + ATP + H(+) = ADP-D-glycero-beta-D-manno-heptose + diphosphate. It participates in nucleotide-sugar biosynthesis; ADP-L-glycero-beta-D-manno-heptose biosynthesis; ADP-L-glycero-beta-D-manno-heptose from D-glycero-beta-D-manno-heptose 7-phosphate: step 1/4. It functions in the pathway nucleotide-sugar biosynthesis; ADP-L-glycero-beta-D-manno-heptose biosynthesis; ADP-L-glycero-beta-D-manno-heptose from D-glycero-beta-D-manno-heptose 7-phosphate: step 3/4. Its function is as follows. Catalyzes the phosphorylation of D-glycero-D-manno-heptose 7-phosphate at the C-1 position to selectively form D-glycero-beta-D-manno-heptose-1,7-bisphosphate. Catalyzes the ADP transfer from ATP to D-glycero-beta-D-manno-heptose 1-phosphate, yielding ADP-D-glycero-beta-D-manno-heptose. This Bradyrhizobium sp. (strain ORS 278) protein is Bifunctional protein HldE.